A 656-amino-acid polypeptide reads, in one-letter code: MVFKSRIKWIALFVLILSMGSLVVHLSMTKSSGVQLAYSARDNLWQDFDSLLGAQDFRNKHLWRPVKSLETLQPYANPRNSYPAPSSKNNGFIYAKIFGGFDKIRSSICDLVTISRLLNATLVIPELQESLRSKGISNKFKSFSYLYDEEQFIAFLKNDVIVMKTLPESLKAARKRNEFPLFKPKNSASPKFYLEDVLPKLKKANVIGLIVSDGGCLQSALPASMPELQRLRCRVAFHALQLRPEIQVLAKEMVDRLRKSGQPFLAYHPGLVREKLAYHGCAELFQDIHSELIQYRRAQMIKQRFILEELIVDSRLRRDNGLCPLMPEEVGILLKALGYSQKAIIYLAGSEIFGGQRVLIPLRAMFPNLVDRTSLCSTEELSELVGPETPLPENTYKMPPRKSDKQLKEEWNKAGPRPRPLPPPPDRPIYQHEKEGWYGWLTENDTEPSPSPMDLRNQAHRLLWDALDFAVSVEADVFFPGFNNDGSGWPDFSSLVMGQRLYERPSSRTYRLDRKVIQELFNITREDMYHPNRNWTLRVRKHLNSSLGESGLIRQSMLSKPRSFLSHPLPECSCRTSALEDSRQIQSDDGRFLYGGEDECPKWIKSAGVEKSKTDDGDQPDYDHDLLAEQSETEEEFAKSKVASAFDQDEEWDPND.

A helical; Signal-anchor for type II membrane protein transmembrane segment spans residues 9 to 29 (WIALFVLILSMGSLVVHLSMT). Asn119 carries an N-linked (GlcNAc...) asparagine glycan. A disordered region spans residues 381–426 (LSELVGPETPLPENTYKMPPRKSDKQLKEEWNKAGPRPRPLPPPPD). Residues 401 to 412 (RKSDKQLKEEWN) show a composition bias toward basic and acidic residues. The segment covering 417–426 (RPRPLPPPPD) has biased composition (pro residues). Residues Asn444, Asn522, Asn534, and Asn544 are each glycosylated (N-linked (GlcNAc...) asparagine). Positions 631-656 (SETEEEFAKSKVASAFDQDEEWDPND) are disordered. Residues 647 to 656 (DQDEEWDPND) show a composition bias toward acidic residues.

This sequence belongs to the glycosyltransferase GT106 family.

It is found in the membrane. The protein operates within glycan metabolism. The polypeptide is Protein EMBRYO SAC DEVELOPMENT ARREST 30 (Arabidopsis thaliana (Mouse-ear cress)).